The sequence spans 236 residues: Calcium-binding lectin RapA2 (236 aa).

It is found in the secreted. Functionally, interacts specifically in a calcium-dependent manner with the acidic exopolysaccharide (EPS) and capsular polysaccharide produced by R.leguminosarum. Could be involved in the development of the biofilm matrix made of EPS. The chain is Calcium-binding lectin RapA2 from Rhizobium johnstonii (strain DSM 114642 / LMG 32736 / 3841) (Rhizobium leguminosarum bv. viciae).